The following is a 553-amino-acid chain: Probable malate:quinone oxidoreductase (553 aa).

The span at 534–543 (QLKPQVQPQP) shows a compositional bias: low complexity. The segment at 534–553 (QLKPQVQPQPAHKAVADIAL) is disordered.

Belongs to the MQO family. Requires FAD as cofactor.

It carries out the reaction (S)-malate + a quinone = a quinol + oxaloacetate. The protein operates within carbohydrate metabolism; tricarboxylic acid cycle; oxaloacetate from (S)-malate (quinone route): step 1/1. This Citrobacter koseri (strain ATCC BAA-895 / CDC 4225-83 / SGSC4696) protein is Probable malate:quinone oxidoreductase.